A 209-amino-acid polypeptide reads, in one-letter code: Ribonuclease HII (209 aa).

One can recognise an RNase H type-2 domain in the interval G18–G209. Residues D24, E25, and D116 each coordinate a divalent metal cation.

It belongs to the RNase HII family. The cofactor is Mn(2+). Mg(2+) serves as cofactor.

The protein resides in the cytoplasm. The enzyme catalyses Endonucleolytic cleavage to 5'-phosphomonoester.. Endonuclease that specifically degrades the RNA of RNA-DNA hybrids. The sequence is that of Ribonuclease HII from Shewanella putrefaciens (strain CN-32 / ATCC BAA-453).